Here is a 1296-residue protein sequence, read N- to C-terminus: MTLMNGDGAHEHQAEAEPKQNGHEMGDQTEEGNEQEVIVIQDTGFTVKVQVPGVETFSIQVSPQEMVQEIHQVLMDREDTCHRTCFSLQLDGNVLDNFAELKTIEGFQEGSVLKVVEEPYTVREARIHVRHIRDLLKSLDPSDAFNGVDCNSLSFLSVFTDGDLGDSGKKKKKGNELEQIDCTPPEYILPGSKERPLSPLQPQNKDWKPLQCLKVFTMSGWNPPPGNRKMHGDLMYLYVITMEDRHVSITASTRGFYLNQSTAYNFNPKPANPSFLSHSLVELLNQVSPTFKKNFAALQKKRVQRHPFERIATPFQLYSWTAPQVEHAMDCVRAEDAYTSRLGYEEHIPGQTRDWNEELQTTRELTRKNLPERLLRERAIFKVHSDFTAAATRGAMAVIDGNVMAINPSEETKMQMFIWNNIFFSLGFDVRDHYKDFGGDSAAYVSPTNDLNGVRAYNAVDVEGLYTLGTVVVDYRGYRVTAQSIIPGILEREQEQSVIYGSIDFGKTVVSHPKYLELLEKTSRPLKIQKHTVLNDKDEEVELCSSVECKGIIGNDGRHYILDLLRTFPPDLNFLPVEGETMPEECTKMGFPKEHRHKLCCLRQELVDAFVEHRYLLFMKLAAMHLMQQKASIKDVLGTEASTASEQLEGNGPSEEKEDLDLDGEAQLKQLEETMAAHKETVDTRSKEVILKACQAVGSISNTSFDIRFNPDIFSPGVRFPNESQEEVQNQKQLLKDAAAFVLTCQIPCLIKDCLDHSVVPMDGTTLAEAMHQRGINMRYLGKVIDVVRKFPVPSQLDHIYKILISEVITRSAKHIFKTYLQGVELSALSAAISHFLNCFLSSFPNSVAHLQSDELVSKKKSKKRRNRNLGNTDNTAWANTSPQELWKNICSEAKSYFDFNLECENVDQAMEVYNLQKISLLREICIKVGIQILLKEYNFDSKHKPTFTEEDILNIFPVVKHVNPKATDAFHFFQSGQAKVQQGYLKEGCELINEALNLFNNVYGAMHVEICACLRLLARLNYIMGDYSEALSNQQKAVLMSERIQGVEHPSTVQEYMHLALYCFANNQVSTSLNLLYRARYLMPLVYGEGHPEMALLDSNIGLVLHGVMEYDLSLRFLENALTINSKYHGVKSLKVALSHHLVARVYETKGEFRSALQHEKDGYTIYKNQLGEQHEKTRESSEYLKYLTQQAVALQRTMNEIYKNGSNANIMPLKFTAPSMTSVLEQLNIINGILFIPLSQKDLEHLKAEVQRRQQLQEAIKGAENHEAKTKEPEMSETSDSNINAASVAPESSD.

The interval 1–31 (MTLMNGDGAHEHQAEAEPKQNGHEMGDQTEE) is disordered. Residues 8–26 (GAHEHQAEAEPKQNGHEMG) show a composition bias toward basic and acidic residues. Residues 333–575 (RAEDAYTSRL…RTFPPDLNFL (243 aa)) form the Clu domain. Residues 662–689 (LDGEAQLKQLEETMAAHKETVDTRSKEV) are a coiled coil. TPR repeat units follow at residues 970 to 1003 (AFHF…FNNV), 1012 to 1045 (CACL…SERI), 1096 to 1129 (ALLD…NSKY), and 1138 to 1171 (ALSH…YKNQ). A coiled-coil region spans residues 1242–1274 (QKDLEHLKAEVQRRQQLQEAIKGAENHEAKTKE). Residues 1261 to 1296 (AIKGAENHEAKTKEPEMSETSDSNINAASVAPESSD) are disordered. The span at 1263-1276 (KGAENHEAKTKEPE) shows a compositional bias: basic and acidic residues. The span at 1278-1296 (SETSDSNINAASVAPESSD) shows a compositional bias: polar residues.

This sequence belongs to the CLU family.

It localises to the cytoplasm. The protein resides in the cytoplasmic granule. MRNA-binding protein involved in proper cytoplasmic distribution of mitochondria. Specifically binds mRNAs of nuclear-encoded mitochondrial proteins in the cytoplasm and regulates transport or translation of these transcripts close to mitochondria, playing a role in mitochondrial biogenesis. The polypeptide is Clustered mitochondria protein homolog (Xenopus tropicalis (Western clawed frog)).